Reading from the N-terminus, the 469-residue chain is MTTKTRFAPSPTGFLHVGGARTALYSWLQARANNGEFVLRIEDTDIERSTQAACDAILEGMNWLGLTWDEGPYYQTKRFDRYNEIIAQMLEQGTAYKCYCSRERIDALREAQAANGEAQKYDGCCRDLPARDTDEPFVVRFKNPIGGSVVFDDHVRGRIEFSNDALDDLIIARTDGVPTYNFCVVVDDWDMGITCVVRGEDHINNTPRQINILKALGAPIPEYAHVSMILGDDGAKLSKRHGAVSVMQYRDDGYLPEALLNYLVRLGWSHGDQEVFSLEEMKQLFKLDDINKAPSAFNTEKLVWLNQHYIKTLDPEYVASHLQWHMDDQKIDTSNGPALSAVVTALAERAKTLKELAASSRYFYEDFAEFDAEQAKKHLRGVALEPLQLVQQKLAALTEWTVEAIHQAIEATATELEVGMGKVGMPLRVAVTGAGQSPGLDITLFLIGKVRSEQRISKAIEFVADRINS.

Positions 9–19 (PSPTGFLHVGG) match the 'HIGH' region motif. Residues C98, C100, C125, and D127 each coordinate Zn(2+). The short motif at 236-240 (KLSKR) is the 'KMSKS' region element. K239 provides a ligand contact to ATP.

This sequence belongs to the class-I aminoacyl-tRNA synthetase family. Glutamate--tRNA ligase type 1 subfamily. In terms of assembly, monomer. Zn(2+) serves as cofactor.

The protein resides in the cytoplasm. The enzyme catalyses tRNA(Glu) + L-glutamate + ATP = L-glutamyl-tRNA(Glu) + AMP + diphosphate. Catalyzes the attachment of glutamate to tRNA(Glu) in a two-step reaction: glutamate is first activated by ATP to form Glu-AMP and then transferred to the acceptor end of tRNA(Glu). This is Glutamate--tRNA ligase from Shewanella sp. (strain MR-4).